Here is a 341-residue protein sequence, read N- to C-terminus: S-adenosylmethionine:tRNA ribosyltransferase-isomerase (341 aa).

It belongs to the QueA family. Monomer.

The protein resides in the cytoplasm. The catalysed reaction is 7-aminomethyl-7-carbaguanosine(34) in tRNA + S-adenosyl-L-methionine = epoxyqueuosine(34) in tRNA + adenine + L-methionine + 2 H(+). The protein operates within tRNA modification; tRNA-queuosine biosynthesis. Its function is as follows. Transfers and isomerizes the ribose moiety from AdoMet to the 7-aminomethyl group of 7-deazaguanine (preQ1-tRNA) to give epoxyqueuosine (oQ-tRNA). The polypeptide is S-adenosylmethionine:tRNA ribosyltransferase-isomerase (Staphylococcus epidermidis (strain ATCC 12228 / FDA PCI 1200)).